Reading from the N-terminus, the 190-residue chain is Probable RNA-binding protein 18 (190 aa).

Positions histidine 25–alanine 106 constitute an RRM domain. Residues valine 166 to arginine 190 are disordered.

The polypeptide is Probable RNA-binding protein 18 (Rbm18) (Mus musculus (Mouse)).